Reading from the N-terminus, the 396-residue chain is DNA polymerase IV (396 aa).

A UmuC domain is found at 2 to 182 (ILHVDMDAFY…LPVSRLWGVG (181 aa)). 2 residues coordinate Mg(2+): D6 and D100. Residue E101 is part of the active site.

Belongs to the DNA polymerase type-Y family. As to quaternary structure, monomer. Mg(2+) is required as a cofactor.

It is found in the cytoplasm. It carries out the reaction DNA(n) + a 2'-deoxyribonucleoside 5'-triphosphate = DNA(n+1) + diphosphate. Poorly processive, error-prone DNA polymerase involved in untargeted mutagenesis. Copies undamaged DNA at stalled replication forks, which arise in vivo from mismatched or misaligned primer ends. These misaligned primers can be extended by PolIV. Exhibits no 3'-5' exonuclease (proofreading) activity. May be involved in translesional synthesis, in conjunction with the beta clamp from PolIII. This Rhodopirellula baltica (strain DSM 10527 / NCIMB 13988 / SH1) protein is DNA polymerase IV.